We begin with the raw amino-acid sequence, 100 residues long: U-myrmeciitoxin(01)-Mg7b (100 aa).

An N-terminal signal peptide occupies residues 1–17; that stretch reads MKLSCLSLALAIILVLA. A propeptide spanning residues 18-50 is cleaved from the precursor; the sequence is IVYSPHMEVKALADAEPDAIGFADAFGEADAEP. The O-linked (GalNAc...) serine glycan is linked to Ser-85. Residues Thr-94 and Thr-95 are each glycosylated (O-linked (GalNAc...) threonine).

The protein belongs to the formicidae venom precursor-01 superfamily. Glycosylation is critical to maintaining the aqueous solubility of this protein, but does not directly contribute to its activity. In terms of tissue distribution, expressed by the venom gland.

The protein localises to the secreted. It is found in the target cell membrane. In terms of biological role, neurotoxin that triggers pain behavior and inflammation in mammals, and is paralytic and lethal to insects. Causes a time-dependent increase in cell leak current. May act by targeting membranes. The protein is U-myrmeciitoxin(01)-Mg7b of Myrmecia gulosa (Red bulldog ant).